A 160-amino-acid chain; its full sequence is Small ribosomal subunit protein uS19 (160 aa).

Residues 1–27 (MARQKFSGKGGKGKSKKGQQSTAPRRR) are disordered.

It belongs to the universal ribosomal protein uS19 family.

In terms of biological role, protein S19 forms a complex with S13 that binds strongly to the 16S ribosomal RNA. The sequence is that of Small ribosomal subunit protein uS19 from Methanococcus vannielii (strain ATCC 35089 / DSM 1224 / JCM 13029 / OCM 148 / SB).